The chain runs to 590 residues: Aspartate--tRNA(Asp/Asn) ligase (590 aa).

An L-aspartate-binding site is contributed by Glu175. The segment at 199-202 is aspartate; the sequence is QQYK. The L-aspartate site is built by Arg221 and His450. Residue 221–223 participates in ATP binding; that stretch reads RDE. Glu484 lines the ATP pocket. Residue Arg491 participates in L-aspartate binding. 536-539 lines the ATP pocket; the sequence is GIDR.

This sequence belongs to the class-II aminoacyl-tRNA synthetase family. Type 1 subfamily. Homodimer.

Its subcellular location is the cytoplasm. It catalyses the reaction tRNA(Asx) + L-aspartate + ATP = L-aspartyl-tRNA(Asx) + AMP + diphosphate. Its function is as follows. Aspartyl-tRNA synthetase with relaxed tRNA specificity since it is able to aspartylate not only its cognate tRNA(Asp) but also tRNA(Asn). Reaction proceeds in two steps: L-aspartate is first activated by ATP to form Asp-AMP and then transferred to the acceptor end of tRNA(Asp/Asn). The chain is Aspartate--tRNA(Asp/Asn) ligase from Azorhizobium caulinodans (strain ATCC 43989 / DSM 5975 / JCM 20966 / LMG 6465 / NBRC 14845 / NCIMB 13405 / ORS 571).